Here is a 352-residue protein sequence, read N- to C-terminus: Anthranilate phosphoribosyltransferase (352 aa).

5-phospho-alpha-D-ribose 1-diphosphate contacts are provided by residues glycine 94, 97-98 (GS), serine 102, 104-107 (NIST), 122-130 (KHGNRAVSS), and serine 134. Glycine 94 serves as a coordination point for anthranilate. Residue serine 106 coordinates Mg(2+). Asparagine 125 provides a ligand contact to anthranilate. An anthranilate-binding site is contributed by arginine 180. Mg(2+) contacts are provided by aspartate 239 and glutamate 240.

This sequence belongs to the anthranilate phosphoribosyltransferase family. As to quaternary structure, homodimer. Mg(2+) is required as a cofactor.

It carries out the reaction N-(5-phospho-beta-D-ribosyl)anthranilate + diphosphate = 5-phospho-alpha-D-ribose 1-diphosphate + anthranilate. It functions in the pathway amino-acid biosynthesis; L-tryptophan biosynthesis; L-tryptophan from chorismate: step 2/5. Functionally, catalyzes the transfer of the phosphoribosyl group of 5-phosphorylribose-1-pyrophosphate (PRPP) to anthranilate to yield N-(5'-phosphoribosyl)-anthranilate (PRA). This chain is Anthranilate phosphoribosyltransferase, found in Citrifermentans bemidjiense (strain ATCC BAA-1014 / DSM 16622 / JCM 12645 / Bem) (Geobacter bemidjiensis).